A 159-amino-acid chain; its full sequence is 2-C-methyl-D-erythritol 2,4-cyclodiphosphate synthase (159 aa).

A divalent metal cation-binding residues include Asp-10 and His-12. Residues 10 to 12 (DVH) and 36 to 37 (HS) contribute to the 4-CDP-2-C-methyl-D-erythritol 2-phosphate site. His-44 contributes to the a divalent metal cation binding site. 4-CDP-2-C-methyl-D-erythritol 2-phosphate contacts are provided by residues 58–60 (DIG), 63–67 (FPDTD), 102–108 (AQAPKMA), 134–137 (TTTE), Phe-141, and Arg-144.

The protein belongs to the IspF family. In terms of assembly, homotrimer. A divalent metal cation is required as a cofactor.

It catalyses the reaction 4-CDP-2-C-methyl-D-erythritol 2-phosphate = 2-C-methyl-D-erythritol 2,4-cyclic diphosphate + CMP. The protein operates within isoprenoid biosynthesis; isopentenyl diphosphate biosynthesis via DXP pathway; isopentenyl diphosphate from 1-deoxy-D-xylulose 5-phosphate: step 4/6. In terms of biological role, involved in the biosynthesis of isopentenyl diphosphate (IPP) and dimethylallyl diphosphate (DMAPP), two major building blocks of isoprenoid compounds. Catalyzes the conversion of 4-diphosphocytidyl-2-C-methyl-D-erythritol 2-phosphate (CDP-ME2P) to 2-C-methyl-D-erythritol 2,4-cyclodiphosphate (ME-CPP) with a corresponding release of cytidine 5-monophosphate (CMP). In Idiomarina loihiensis (strain ATCC BAA-735 / DSM 15497 / L2-TR), this protein is 2-C-methyl-D-erythritol 2,4-cyclodiphosphate synthase.